The sequence spans 258 residues: uncharacterized protein (258 aa).

Residues valine 3–serine 58 enclose the HTH deoR-type domain. A DNA-binding region (H-T-H motif) is located at residues isoleucine 20–aspartate 39.

This is an uncharacterized protein from Bacillus subtilis (strain 168).